The chain runs to 79 residues: Acyl carrier protein 2 (79 aa).

Residues 2–77 (DDIETRVRKL…QAIDYLEEAV (76 aa)) enclose the Carrier domain. Ser37 bears the O-(pantetheine 4'-phosphoryl)serine mark.

This sequence belongs to the acyl carrier protein (ACP) family. In terms of processing, 4'-phosphopantetheine is transferred from CoA to a specific serine of apo-ACP by AcpS. This modification is essential for activity because fatty acids are bound in thioester linkage to the sulfhydryl of the prosthetic group.

It is found in the cytoplasm. It functions in the pathway lipid metabolism; fatty acid biosynthesis. Functionally, carrier of the growing fatty acid chain in fatty acid biosynthesis. In Pseudomonas aeruginosa (strain ATCC 15692 / DSM 22644 / CIP 104116 / JCM 14847 / LMG 12228 / 1C / PRS 101 / PAO1), this protein is Acyl carrier protein 2.